Consider the following 502-residue polypeptide: MTLPLLSVSSDRAVDVEADALVVAVSSEKEGLRVHAPEGLEFDADGLSDIGVTGGRDEVVRIAGTGTAARTIAFVGVGSGPVDAVALRYAVGSATRQLRGVAHVAVAVPVSSLVDLTAVLEGAALGTYSFDAYRRDSLAGQKPRATAVTVLAQGDSWTADDADEAVAHATAVAGAVAGTKDLVNTPPLDLYPATFVDAVHERTAGLPVDVRVWDEVALAADGFGGILGVGQGSTRPPRLVKVAYSPAGATRHLALVGKGITYDTGGISLKPAVPMIGMKYDMTGAATILEVVVAAARLELPVRLTAWLCIAENMPSGSAIRPDDVLRMRGGTTVEVLNTDAEGRLVMADGIVAASEEHPDAIVDIATLTGAQVVALGERYSAVMGEDALVARLLDAAREQGESMWGMPLPEEMRALLNSDIADIANVKPGNPAGGMLVAGVFLKEFVGRTGDEDDAPRIPWAHVDIAGPSHNKGGGHGFTGKGPTGVAVRTLLALAAGFSRA.

The Mn(2+) site is built by Lys-258 and Asp-263. Lys-270 is a catalytic residue. Mn(2+) contacts are provided by Asp-281, Asp-340, and Glu-342. Arg-344 is a catalytic residue.

The protein belongs to the peptidase M17 family. Mn(2+) is required as a cofactor.

The protein localises to the cytoplasm. The catalysed reaction is Release of an N-terminal amino acid, Xaa-|-Yaa-, in which Xaa is preferably Leu, but may be other amino acids including Pro although not Arg or Lys, and Yaa may be Pro. Amino acid amides and methyl esters are also readily hydrolyzed, but rates on arylamides are exceedingly low.. It carries out the reaction Release of an N-terminal amino acid, preferentially leucine, but not glutamic or aspartic acids.. Presumably involved in the processing and regular turnover of intracellular proteins. Catalyzes the removal of unsubstituted N-terminal amino acids from various peptides. This Clavibacter michiganensis subsp. michiganensis (strain NCPPB 382) protein is Probable cytosol aminopeptidase.